The chain runs to 107 residues: MVVHIENLNAFSAALKNAGDKLVVVDFTATWCGPCQKIGPIFETLSKSEDYQNVVFLKVDVDDAADVSSHCDIKCMPTFHFYKNGQKIDEFSGANEQTLKQKINDHK.

The 106-residue stretch at 2 to 107 folds into the Thioredoxin domain; sequence VVHIENLNAF…TLKQKINDHK (106 aa). Residues Cys32 and Cys35 each act as nucleophile in the active site. The cysteines at positions 32 and 35 are disulfide-linked. S-nitrosocysteine occurs at positions 71 and 75.

This sequence belongs to the thioredoxin family. In terms of processing, may be nitrosylated on several cysteine residues, depending on the oxidation state. Nitrosylated Cys-75 may serve as donor for nitrosylation of target proteins.

The protein localises to the nucleus. It is found in the cytoplasm. Its subcellular location is the secreted. In terms of biological role, participates in various redox reactions through the reversible oxidation of its active center dithiol to a disulfide and catalyzes dithiol-disulfide exchange reactions. Plays a role in the reversible S-nitrosylation of cysteine residues in target proteins, and thereby contributes to the response to intracellular nitric oxide. Nitrosylates the active site Cys of CASP3 in response to nitric oxide (NO), and thereby inhibits caspase-3 activity. Induces the FOS/JUN AP-1 DNA binding activity in ionizing radiation (IR) cells through its oxidation/reduction status and stimulates AP-1 transcriptional activity. The protein is Thioredoxin (txn) of Ictalurus punctatus (Channel catfish).